A 244-amino-acid polypeptide reads, in one-letter code: Homeobox-leucine zipper protein HOX14 (244 aa).

The disordered stretch occupies residues 25-64 (ASGEVQGERPRARRRRRRGARCVGGGGGGGEVDGGDPKKR). A compositionally biased stretch (basic residues) spans 35–44 (RARRRRRRGA). Over residues 46-56 (CVGGGGGGGEV) the composition is skewed to gly residues. Positions 59–118 (GDPKKRRLSDEQVEMLELSFREERKLETGRKVHLASELGLDPKQVAVWFQNRRARHKSKL) form a DNA-binding region, homeobox. Residues 108–167 (QNRRARHKSKLLEEEFSKLKHAHDAAILHKCHLENEVLRLKERLVVAEEEVRRLRSAAGS) adopt a coiled-coil conformation.

The protein belongs to the HD-ZIP homeobox family. Class I subfamily. Expressed in roots, stems, leaf blades and panicles.

It is found in the nucleus. Probable transcription factor. This chain is Homeobox-leucine zipper protein HOX14 (HOX14), found in Oryza sativa subsp. indica (Rice).